The primary structure comprises 154 residues: Crossover junction endodeoxyribonuclease RuvC (154 aa).

Residues aspartate 7, glutamate 67, and aspartate 139 contribute to the active site. 3 residues coordinate Mg(2+): aspartate 7, glutamate 67, and aspartate 139.

It belongs to the RuvC family. In terms of assembly, homodimer which binds Holliday junction (HJ) DNA. The HJ becomes 2-fold symmetrical on binding to RuvC with unstacked arms; it has a different conformation from HJ DNA in complex with RuvA. In the full resolvosome a probable DNA-RuvA(4)-RuvB(12)-RuvC(2) complex forms which resolves the HJ. The cofactor is Mg(2+).

It localises to the cytoplasm. It catalyses the reaction Endonucleolytic cleavage at a junction such as a reciprocal single-stranded crossover between two homologous DNA duplexes (Holliday junction).. Functionally, the RuvA-RuvB-RuvC complex processes Holliday junction (HJ) DNA during genetic recombination and DNA repair. Endonuclease that resolves HJ intermediates. Cleaves cruciform DNA by making single-stranded nicks across the HJ at symmetrical positions within the homologous arms, yielding a 5'-phosphate and a 3'-hydroxyl group; requires a central core of homology in the junction. The consensus cleavage sequence is 5'-(A/T)TT(C/G)-3'. Cleavage occurs on the 3'-side of the TT dinucleotide at the point of strand exchange. HJ branch migration catalyzed by RuvA-RuvB allows RuvC to scan DNA until it finds its consensus sequence, where it cleaves and resolves the cruciform DNA. This Synechococcus sp. (strain CC9902) protein is Crossover junction endodeoxyribonuclease RuvC.